Here is a 119-residue protein sequence, read N- to C-terminus: Ribonuclease P protein component (119 aa).

This sequence belongs to the RnpA family. Consists of a catalytic RNA component (M1 or rnpB) and a protein subunit.

It carries out the reaction Endonucleolytic cleavage of RNA, removing 5'-extranucleotides from tRNA precursor.. Its function is as follows. RNaseP catalyzes the removal of the 5'-leader sequence from pre-tRNA to produce the mature 5'-terminus. It can also cleave other RNA substrates such as 4.5S RNA. The protein component plays an auxiliary but essential role in vivo by binding to the 5'-leader sequence and broadening the substrate specificity of the ribozyme. This Aromatoleum aromaticum (strain DSM 19018 / LMG 30748 / EbN1) (Azoarcus sp. (strain EbN1)) protein is Ribonuclease P protein component.